The chain runs to 589 residues: Phenylalanine--tRNA ligase beta subunit (589 aa).

In terms of domain architecture, B5 spans 290-368; the sequence is LNPTCFKADI…IAYGYDNLKH (79 aa). Asp346, Asp352, Glu355, and Asp356 together coordinate Mg(2+).

Belongs to the phenylalanyl-tRNA synthetase beta subunit family. Type 2 subfamily. As to quaternary structure, tetramer of two alpha and two beta subunits. It depends on Mg(2+) as a cofactor.

It is found in the cytoplasm. The protein resides in the nucleus. The catalysed reaction is tRNA(Phe) + L-phenylalanine + ATP = L-phenylalanyl-tRNA(Phe) + AMP + diphosphate + H(+). The polypeptide is Phenylalanine--tRNA ligase beta subunit (frs1) (Schizosaccharomyces pombe (strain 972 / ATCC 24843) (Fission yeast)).